Consider the following 65-residue polypeptide: uncharacterized protein (65 aa).

The protein localises to the plastid. It is found in the chloroplast. This is an uncharacterized protein from Mesostigma viride (Green alga).